A 513-amino-acid polypeptide reads, in one-letter code: Noroxomaritidine synthase (513 aa).

The chain crosses the membrane as a helical span at residues 14 to 34 (HYPEILIAIACFLIFSLLLSA). Cysteine 458 serves as a coordination point for heme.

The protein belongs to the cytochrome P450 family. It depends on heme as a cofactor.

The protein resides in the membrane. The catalysed reaction is 4'-O-methylnorbelladine + reduced [NADPH--hemoprotein reductase] + O2 = (10bS,4aR)-noroxomaritidine + oxidized [NADPH--hemoprotein reductase] + 2 H2O + H(+). It catalyses the reaction 4'-O-methylnorbelladine + reduced [NADPH--hemoprotein reductase] + O2 = (10bR,4aS)-noroxomaritidine + oxidized [NADPH--hemoprotein reductase] + 2 H2O + H(+). It participates in alkaloid biosynthesis. Functionally, cytochrome P450 that catalyzes an intramolecular para-para' C-C phenol coupling of 4'-O-methylnorbelladine in alkaloids biosynthesis, including haemanthamine- and crinamine-type alkaloids, promising anticancer agents. Catalyzes the formation of (10bR,4aS)-noroxomaritidine and (10bS,4aR)-noroxomaritidine from 4'-O-methylnorbelladine. Also produces N-demethylnarwedine as a minor product. Involved in the biosynthesis of haemanthamine. Can also use 4'-O-methyl-N-methylnorbelladine, (S)- and (R)-coclaurine as substrates, but not 3'-O-methylnorbelladine, 3',4'-O-dimethylnorbelladine, norbelladine, haemanthamine, (10bS,4aR)- or (10bR,4aS)-noroxomaritidine, isovanillin or tyramine. The protein is Noroxomaritidine synthase of Narcissus aff. pseudonarcissus MK-2014 (Daffodil).